The chain runs to 254 residues: Small ribosomal subunit protein uS2 (254 aa).

This sequence belongs to the universal ribosomal protein uS2 family.

The chain is Small ribosomal subunit protein uS2 from Oceanobacillus iheyensis (strain DSM 14371 / CIP 107618 / JCM 11309 / KCTC 3954 / HTE831).